The following is a 735-amino-acid chain: Probable E3 ubiquitin-protein ligase MID2 (735 aa).

An RING-type zinc finger spans residues 30 to 80 (CPICLELFEDPLLLPCAHSLCFSCAHRILVSSCSSGESIEPITAFQCPTCR). The B box-type 1; degenerate zinc-finger motif lies at 137 to 184 (IACQFCEQDPPRDAVKTCITCEVSYCDRCLRATHPNKKPFTSHRLVEP). Residues 190-232 (LRGITCLDHENEKVNMYCVSDDQLICALCKLVGRHRDHQVASL) form a B box-type 2 zinc finger. Cys195, His198, Cys218, and His224 together coordinate Zn(2+). The stretch at 233–301 (NDRFEKLKQT…IIQQRKQMIA (69 aa)) forms a coiled coil. Residues 340 to 399 (LKENDQARFLQSAKNIAERVAMATASSQVLIPDINFNDAFENFALDFSREKKLLEGLDYL) form the COS domain. Residues 398 to 531 (YLTAPNPPSI…RNSEPTRLKT (134 aa)) enclose the Fibronectin type-III domain. Positions 516–709 (INQAGSRNSE…ILSGLPAPDF (194 aa)) constitute a B30.2/SPRY domain.

Belongs to the TRIM/RBCC family. In terms of assembly, homodimer or heterodimer with MID1. Interacts with IGBP1. Phosphorylated on serine and threonine residues. Low level in fetal kidney and lung, and in adult prostate, ovary and small intestine.

It localises to the cytoplasm. The protein localises to the cytoskeleton. It catalyses the reaction S-ubiquitinyl-[E2 ubiquitin-conjugating enzyme]-L-cysteine + [acceptor protein]-L-lysine = [E2 ubiquitin-conjugating enzyme]-L-cysteine + N(6)-ubiquitinyl-[acceptor protein]-L-lysine.. Its pathway is protein modification; protein ubiquitination. Its function is as follows. E3 ubiquitin ligase that plays a role in microtubule stabilization. Mediates the 'Lys-48'-linked polyubiquitination of LRRK2 to drive its localization to microtubules and its proteasomal degradation in neurons. This ubiquitination inhibits LRRK2 kinase activation by RAB29. The polypeptide is Probable E3 ubiquitin-protein ligase MID2 (MID2) (Homo sapiens (Human)).